The sequence spans 128 residues: Protein BEX1 (128 aa).

Residues 1 to 55 (MESKDQGAKNLNMENDHQKKEEKEEKPQDTIKREPVVAPTFEAGKNCAPRGGRRR) are disordered. Residues 14-35 (ENDHQKKEEKEEKPQDTIKREP) are compositionally biased toward basic and acidic residues. Ser-105 carries the phosphoserine; by PKB/AKT1 modification. Residues 107–128 (SLRAVSTDPPHHDHHDEFCLMP) form a disordered region. The span at 115–128 (PPHHDHHDEFCLMP) shows a compositional bias: basic and acidic residues. Residues 117-121 (HHDHH) form a his cluster region. A Zn(2+)-binding site is contributed by Cys-125.

This sequence belongs to the BEX family. As to quaternary structure, interacts with neurotrophin receptor p75NTR/NGFR. Interacts with OMP. In terms of processing, phosphorylated. Phosphorylation of Ser-105 protects it from the proteasome. Post-translationally, ubiquitinated. Degraded by the proteasome. In terms of tissue distribution, expressed in the central nervous system. Expressed in Schwann cells from newborn sciatic nerve.

Its subcellular location is the nucleus. The protein localises to the cytoplasm. Signaling adapter molecule involved in p75NTR/NGFR signaling. Plays a role in cell cycle progression and neuronal differentiation. Inhibits neuronal differentiation in response to nerve growth factor (NGF). May act as a link between the cell cycle and neurotrophic factor signaling, possibly by functioning as an upstream modulator of receptor signaling, coordinating biological responses to external signals with internal cellular states. In absence of reductive stress, acts as a pseudosubstrate for the CRL2(FEM1B) complex: associates with FEM1B via zinc, thereby preventing association between FEM1B and its substrates. The polypeptide is Protein BEX1 (Bex1) (Rattus norvegicus (Rat)).